Consider the following 179-residue polypeptide: Large ribosomal subunit protein uL5 (179 aa).

Belongs to the universal ribosomal protein uL5 family. In terms of assembly, part of the 50S ribosomal subunit; part of the 5S rRNA/L5/L18/L25 subcomplex. Contacts the 5S rRNA and the P site tRNA. Forms a bridge to the 30S subunit in the 70S ribosome.

Functionally, this is one of the proteins that bind and probably mediate the attachment of the 5S RNA into the large ribosomal subunit, where it forms part of the central protuberance. In the 70S ribosome it contacts protein S13 of the 30S subunit (bridge B1b), connecting the 2 subunits; this bridge is implicated in subunit movement. Contacts the P site tRNA; the 5S rRNA and some of its associated proteins might help stabilize positioning of ribosome-bound tRNAs. The sequence is that of Large ribosomal subunit protein uL5 from Citrobacter koseri (strain ATCC BAA-895 / CDC 4225-83 / SGSC4696).